Here is a 119-residue protein sequence, read N- to C-terminus: NAD(P)H-quinone oxidoreductase subunit M (119 aa).

Belongs to the complex I NdhM subunit family. In terms of assembly, NDH-1 can be composed of about 15 different subunits; different subcomplexes with different compositions have been identified which probably have different functions.

The protein resides in the cellular thylakoid membrane. It carries out the reaction a plastoquinone + NADH + (n+1) H(+)(in) = a plastoquinol + NAD(+) + n H(+)(out). The enzyme catalyses a plastoquinone + NADPH + (n+1) H(+)(in) = a plastoquinol + NADP(+) + n H(+)(out). NDH-1 shuttles electrons from an unknown electron donor, via FMN and iron-sulfur (Fe-S) centers, to quinones in the respiratory and/or the photosynthetic chain. The immediate electron acceptor for the enzyme in this species is believed to be plastoquinone. Couples the redox reaction to proton translocation, and thus conserves the redox energy in a proton gradient. Cyanobacterial NDH-1 also plays a role in inorganic carbon-concentration. This chain is NAD(P)H-quinone oxidoreductase subunit M, found in Picosynechococcus sp. (strain ATCC 27264 / PCC 7002 / PR-6) (Agmenellum quadruplicatum).